A 187-amino-acid chain; its full sequence is ECF RNA polymerase sigma factor SigK (187 aa).

The tract at residues 30–96 (YDHTKSRVYG…RAVDRVRCEQ (67 aa)) is sigma-70 factor domain-2. Positions 53-56 (ETTQ) match the Interaction with polymerase core subunit RpoC motif. The interval 133–182 (CLKALTDTQRQCIELAYYGGLTYVEVSRRLAANLSTIKSRMRDALRSLRN) is sigma-70 factor domain-4. The segment at residues 155 to 174 (YVEVSRRLAANLSTIKSRMR) is a DNA-binding region (H-T-H motif).

Belongs to the sigma-70 factor family. ECF subfamily. Interacts transiently with the RNA polymerase catalytic core formed by RpoA, RpoB, RpoC and RpoZ (2 alpha, 1 beta, 1 beta' and 1 omega subunit) to form the RNA polymerase holoenzyme that can initiate transcription. Interacts (via sigma-70 factor domain 4) with anti-sigma-K factor RskA.

Its function is as follows. Sigma factors are initiation factors that promote the attachment of RNA polymerase to specific initiation sites and are then released. Extracytoplasmic function (ECF) sigma factors are held in an inactive form by an anti-sigma factor until released by regulated intramembrane proteolysis. The protein is ECF RNA polymerase sigma factor SigK (sigK) of Mycobacterium tuberculosis (strain ATCC 25177 / H37Ra).